Here is a 199-residue protein sequence, read N- to C-terminus: NAD(P)H dehydrogenase (quinone) (199 aa).

The Flavodoxin-like domain occupies 4–190; it reads VLVLYYSSYG…TGARYQGRKI (187 aa). FMN is bound by residues 10-15 and 78-80; these read SSYGHL and TRF. Tyr-12 is an NAD(+) binding site. Residue Trp-98 coordinates substrate. FMN contacts are provided by residues 113-119 and His-134; that span reads STATQHG.

This sequence belongs to the WrbA family. Requires FMN as cofactor.

It catalyses the reaction a quinone + NADH + H(+) = a quinol + NAD(+). It carries out the reaction a quinone + NADPH + H(+) = a quinol + NADP(+). This chain is NAD(P)H dehydrogenase (quinone), found in Caulobacter vibrioides (strain ATCC 19089 / CIP 103742 / CB 15) (Caulobacter crescentus).